A 464-amino-acid chain; its full sequence is Soluble pyridine nucleotide transhydrogenase (464 aa).

35–44 (DNRPLVGGNC) serves as a coordination point for FAD.

It belongs to the class-I pyridine nucleotide-disulfide oxidoreductase family. FAD serves as cofactor.

The protein resides in the cytoplasm. It carries out the reaction NAD(+) + NADPH = NADH + NADP(+). Functionally, conversion of NADPH, generated by peripheral catabolic pathways, to NADH, which can enter the respiratory chain for energy generation. This chain is Soluble pyridine nucleotide transhydrogenase, found in Ectopseudomonas mendocina (strain ymp) (Pseudomonas mendocina).